A 313-amino-acid chain; its full sequence is Caffeic acid 3-O-methyltransferase (313 aa).

112-118 (IDQDRVF) serves as a coordination point for substrate. The tract at residues 144–162 (AFDYPGTDPRFNKIFNRAM) is substrate binding. S-adenosyl-L-methionine is bound by residues G190, D213, D233, M234, and K247. The active-site Proton acceptor is the H251.

The protein belongs to the class I-like SAM-binding methyltransferase superfamily. Cation-independent O-methyltransferase family. COMT subfamily. As to quaternary structure, homodimer.

The catalysed reaction is (E)-caffeate + S-adenosyl-L-methionine = (E)-ferulate + S-adenosyl-L-homocysteine + H(+). The protein operates within aromatic compound metabolism; phenylpropanoid biosynthesis. Catalyzes the conversion of caffeic acid to ferulic acid and of 5-hydroxyferulic acid to sinapic acid. The resulting products may subsequently be converted to the corresponding alcohols that are incorporated into lignins. The protein is Caffeic acid 3-O-methyltransferase (COMT1) of Eucalyptus globulus (Tasmanian blue gum).